A 331-amino-acid polypeptide reads, in one-letter code: uncharacterized protein (331 aa).

The protein belongs to the IIV-6 335L family.

This is an uncharacterized protein from Invertebrate iridescent virus 6 (IIV-6).